The sequence spans 1384 residues: DNA-directed RNA polymerase subunit beta (1384 aa).

It belongs to the RNA polymerase beta chain family. The RNAP catalytic core consists of 2 alpha, 1 beta, 1 beta' and 1 omega subunit. When a sigma factor is associated with the core the holoenzyme is formed, which can initiate transcription.

It carries out the reaction RNA(n) + a ribonucleoside 5'-triphosphate = RNA(n+1) + diphosphate. DNA-dependent RNA polymerase catalyzes the transcription of DNA into RNA using the four ribonucleoside triphosphates as substrates. The protein is DNA-directed RNA polymerase subunit beta of Xylella fastidiosa (strain M23).